The chain runs to 81 residues: Small ribosomal subunit protein bS16 (81 aa).

This sequence belongs to the bacterial ribosomal protein bS16 family.

This is Small ribosomal subunit protein bS16 from Caldicellulosiruptor saccharolyticus (strain ATCC 43494 / DSM 8903 / Tp8T 6331).